Consider the following 147-residue polypeptide: Large ribosomal subunit protein mL40 (147 aa).

A mitochondrion-targeting transit peptide spans Met-1–Asn-26.

This sequence belongs to the mitochondrion-specific ribosomal protein mL40 family. Component of the mitochondrial large ribosomal subunit (mt-LSU). Mature yeast 74S mitochondrial ribosomes consist of a small (37S) and a large (54S) subunit. The 37S small subunit contains a 15S ribosomal RNA (15S mt-rRNA) and 34 different proteins. The 54S large subunit contains a 21S rRNA (21S mt-rRNA) and 46 different proteins.

Its subcellular location is the mitochondrion. Functionally, component of the mitochondrial ribosome (mitoribosome), a dedicated translation machinery responsible for the synthesis of mitochondrial genome-encoded proteins, including at least some of the essential transmembrane subunits of the mitochondrial respiratory chain. The mitoribosomes are attached to the mitochondrial inner membrane and translation products are cotranslationally integrated into the membrane. The chain is Large ribosomal subunit protein mL40 (MRPL28) from Saccharomyces cerevisiae (strain ATCC 204508 / S288c) (Baker's yeast).